The following is a 169-amino-acid chain: Ureidoglycolate lyase (169 aa).

This sequence belongs to the ureidoglycolate lyase family. In terms of assembly, homodimer. It depends on Ni(2+) as a cofactor.

It carries out the reaction (S)-ureidoglycolate = urea + glyoxylate. Its pathway is nitrogen metabolism; (S)-allantoin degradation. Catalyzes the catabolism of the allantoin degradation intermediate (S)-ureidoglycolate, generating urea and glyoxylate. Involved in the utilization of allantoin as nitrogen source. The sequence is that of Ureidoglycolate lyase from Brucella abortus biovar 1 (strain 9-941).